Reading from the N-terminus, the 99-residue chain is Small ribosomal subunit protein bS16 (99 aa).

The interval 80-99 (PPRQQNEAKRETAETAQPEA) is disordered.

This sequence belongs to the bacterial ribosomal protein bS16 family.

This chain is Small ribosomal subunit protein bS16, found in Thermomicrobium roseum (strain ATCC 27502 / DSM 5159 / P-2).